A 376-amino-acid polypeptide reads, in one-letter code: MFRHGVRTFATTSLRRMAAVAPQEPSQYLLNVSKAQGIAKGLTGAIGNTPLIRLNRLSEETGCEILGKAEFMNPGGSVKDRAALYVVKDAEERGLLRPGGTVVEGTAGNTGIGLAHVCRSKGYKLVIYMPNTQSQGKIDLLRLLGAEVYPVPAVAFENPENYNHQARRHAERLDNAVWTNQFDNIANRRAHIETTGPEIWAQTGGKVDAFTCATGTGGTFAGTTRYLKEVSGGRVKAFLADPPGSVLHSYFSSGGKLIERSGSSITEGIGQGRITDNLKQDVDLVDGSMTISDEKTIEMVYRCLDEEGLYLGASSTLNVVAAKEVAEKLGKGSTVVTMLCDGAYRYADRLFSRKWLEQKNLLGAIPEHLQKYIVLP.

Residues 1-16 constitute a mitochondrion transit peptide; it reads MFRHGVRTFATTSLRR. Position 79 is an N6-(pyridoxal phosphate)lysine (K79). Pyridoxal 5'-phosphate-binding positions include N109, 215–219, and S314; that span reads GTGGT.

It belongs to the cysteine synthase/cystathionine beta-synthase family. Requires pyridoxal 5'-phosphate as cofactor.

The protein localises to the mitochondrion. The enzyme catalyses O-succinyl-L-serine + hydrogen sulfide = L-cysteine + succinate. It carries out the reaction O-acetyl-L-serine + hydrogen sulfide = L-cysteine + acetate. Its pathway is amino-acid biosynthesis; L-cysteine biosynthesis; L-cysteine from L-serine: step 2/2. Its function is as follows. Catalyzes the conversion of O-succinyl-L-serine into cysteine, the last step in the cysteine biosynthesis pathway. Can also use O-acetyl-L-serine. In Neurospora crassa (strain ATCC 24698 / 74-OR23-1A / CBS 708.71 / DSM 1257 / FGSC 987), this protein is Cysteine synthase 1 (cys-17).